Reading from the N-terminus, the 485-residue chain is Glycogen synthase (485 aa).

K20 serves as a coordination point for ADP-alpha-D-glucose.

The protein belongs to the glycosyltransferase 1 family. Bacterial/plant glycogen synthase subfamily.

It catalyses the reaction [(1-&gt;4)-alpha-D-glucosyl](n) + ADP-alpha-D-glucose = [(1-&gt;4)-alpha-D-glucosyl](n+1) + ADP + H(+). It participates in glycan biosynthesis; glycogen biosynthesis. Its function is as follows. Synthesizes alpha-1,4-glucan chains using ADP-glucose. In Vibrio parahaemolyticus serotype O3:K6 (strain RIMD 2210633), this protein is Glycogen synthase.